We begin with the raw amino-acid sequence, 236 residues long: NADH-quinone oxidoreductase subunit C (236 aa).

The interval 1–20 (MSPPNQDAQEGRPDSPTAEV) is disordered.

It belongs to the complex I 30 kDa subunit family. As to quaternary structure, NDH-1 is composed of 14 different subunits. Subunits NuoB, C, D, E, F, and G constitute the peripheral sector of the complex.

The protein localises to the cell membrane. The catalysed reaction is a quinone + NADH + 5 H(+)(in) = a quinol + NAD(+) + 4 H(+)(out). Functionally, NDH-1 shuttles electrons from NADH, via FMN and iron-sulfur (Fe-S) centers, to quinones in the respiratory chain. The immediate electron acceptor for the enzyme in this species is believed to be a menaquinone. Couples the redox reaction to proton translocation (for every two electrons transferred, four hydrogen ions are translocated across the cytoplasmic membrane), and thus conserves the redox energy in a proton gradient. This is NADH-quinone oxidoreductase subunit C from Mycobacterium tuberculosis (strain ATCC 25177 / H37Ra).